The chain runs to 227 residues: Lysosomal-associated transmembrane protein 4B (227 aa).

The next 4 helical transmembrane spans lie at 26–46 (ILLG…LLSA), 72–92 (MCIA…ATYG), 100–120 (WIIP…LVAI), and 153–173 (CLVL…GYLI). The segment at 205–222 (PPYDDATAVTGTAKEPPP) is required for NEDD4 interaction.

The protein belongs to the LAPTM4/LAPTM5 transporter family. In terms of assembly, homooligomer; upon reaching the lysosomes. Interacts with MCOLN1. Interacts with NEDD4; may play a role in the lysosomal sorting of LAPTM4B; enhances HGS association with NEDD4; mediates inhibition of EGFR degradation. Interacts with PIP5K1C; promotes SNX5 association with LAPTM4B; kinase activity of PIP5K1C is required; interaction is regulated by phosphatidylinositol 4,5-bisphosphate generated by PIP5K1C. Interacts with HGS; promotes HGS ubiquitination. Interacts with SNX5. Interacts with SLC3A2 and SLC7A5; recruits SLC3A2 and SLC7A5 to lysosomes to promote leucine uptake into these organelles and is required for mTORC1 activation. Interacts with LRRC32; decreases TGFB1 production in regulatory T cells. Interacts with BECN1; competes with EGFR for LAPTM4B binding; regulates EGFR activity. Interacts with EGFR; positively correlates with EGFR activation. In terms of processing, undergoes proteolytic cleavage following delivery to the lysosomes. Ubiquitinated by NEDD4.

The protein resides in the endomembrane system. Its subcellular location is the late endosome membrane. It localises to the cell membrane. The protein localises to the cell projection. It is found in the lysosome membrane. The protein resides in the endosome membrane. Its subcellular location is the endosome. It localises to the multivesicular body membrane. The protein localises to the multivesicular body lumen. Functionally, required for optimal lysosomal function. Blocks EGF-stimulated EGFR intraluminal sorting and degradation. Conversely by binding with the phosphatidylinositol 4,5-bisphosphate, regulates its PIP5K1C interaction, inhibits HGS ubiquitination and relieves LAPTM4B inhibition of EGFR degradation. Recruits SLC3A2 and SLC7A5 (the Leu transporter) to the lysosome, promoting entry of leucine and other essential amino acid (EAA) into the lysosome, stimulating activation of proton-transporting vacuolar (V)-ATPase protein pump (V-ATPase) and hence mTORC1 activation. Plays a role as negative regulator of TGFB1 production in regulatory T cells. Binds ceramide and facilitates its exit from late endosome in order to control cell death pathways. This is Lysosomal-associated transmembrane protein 4B from Rattus norvegicus (Rat).